Consider the following 1045-residue polypeptide: Collagen alpha-1(VI) chain (1045 aa).

The signal sequence occupies residues 1 to 24 (MKMLQGRLPLTVLHLFLLLGGGMT). Residues 65–255 (DIFFVLDTSE…LTDDEIDNTI (191 aa)) enclose the VWFA 1 domain. Residues 277 to 613 (PSRGLSGPSG…GPPGPGGPPG (337 aa)) are disordered. A triple-helical region region spans residues 280–540 (GLSGPSGPPG…RGDDGRPGNG (261 aa)). The segment covering 297 to 309 (PGLPGDRGLPGDP) has biased composition (low complexity). The segment covering 327–360 (QGIRGEKGGRGAKGSKGDKGKRGIDGVDGQKGED) has biased composition (basic and acidic residues). The segment covering 375-392 (DGAPGSSGPKGDPGPYGT) has biased composition (low complexity). Gly residues predominate over residues 400 to 409 (GTPGTGGRPG). 2 short sequence motifs (cell attachment site) span residues 501–503 (RGD) and 554–556 (RGD). Residues 600-613 (EGPPGPPGPGGPPG) show a composition bias toward pro residues. VWFA domains lie at 638 to 825 (DLLF…LHNV) and 849 to 1035 (DITM…YQSI).

It belongs to the type VI collagen family.

The protein resides in the secreted. It localises to the extracellular space. It is found in the extracellular matrix. Its function is as follows. Collagen VI acts as a cell-binding protein. In Xenopus laevis (African clawed frog), this protein is Collagen alpha-1(VI) chain (col6a1).